Consider the following 160-residue polypeptide: Lipoprotein signal peptidase (160 aa).

3 helical membrane passes run 13–33 (IYIT…HLII), 72–92 (WFLS…ITKL), and 104–124 (SLII…GFVV). Catalysis depends on residues Asp-125 and Asp-143. The helical transmembrane segment at 134 to 154 (WHFATFNIADCSIFIGIIILM) threads the bilayer.

This sequence belongs to the peptidase A8 family.

Its subcellular location is the cell inner membrane. The enzyme catalyses Release of signal peptides from bacterial membrane prolipoproteins. Hydrolyzes -Xaa-Yaa-Zaa-|-(S,diacylglyceryl)Cys-, in which Xaa is hydrophobic (preferably Leu), and Yaa (Ala or Ser) and Zaa (Gly or Ala) have small, neutral side chains.. It functions in the pathway protein modification; lipoprotein biosynthesis (signal peptide cleavage). Functionally, this protein specifically catalyzes the removal of signal peptides from prolipoproteins. This Buchnera aphidicola subsp. Acyrthosiphon pisum (strain Tuc7) protein is Lipoprotein signal peptidase.